A 166-amino-acid chain; its full sequence is Apoptosis regulator M11L (166 aa).

Residues 138–160 form a helical membrane-spanning segment; that stretch reads SGGCKISVYLTAAVVGFVAYGIL.

As to quaternary structure, interacts with host BAX; this interaction inhibits apoptosis activation. Interacts with host BAK1.

Its subcellular location is the host mitochondrion. The protein localises to the host membrane. Plays a role in the inhibition of mitochondria-mediated apoptosis by blocking the activation of mitochondria-tranlocalized BAX thereby maintaining pro-apoptotic BAX in an inactive conformation. Also inhibits apoptosis in a BAX-independent manner by interacting with and inhibiting host BAK1. This Myxoma virus (strain Lausanne) (MYXV) protein is Apoptosis regulator M11L (m011L).